Reading from the N-terminus, the 357-residue chain is Phosphate acyltransferase (357 aa).

It belongs to the PlsX family. Homodimer. Probably interacts with PlsY.

The protein resides in the cytoplasm. It catalyses the reaction a fatty acyl-[ACP] + phosphate = an acyl phosphate + holo-[ACP]. Its pathway is lipid metabolism; phospholipid metabolism. Functionally, catalyzes the reversible formation of acyl-phosphate (acyl-PO(4)) from acyl-[acyl-carrier-protein] (acyl-ACP). This enzyme utilizes acyl-ACP as fatty acyl donor, but not acyl-CoA. In Roseobacter denitrificans (strain ATCC 33942 / OCh 114) (Erythrobacter sp. (strain OCh 114)), this protein is Phosphate acyltransferase.